Reading from the N-terminus, the 556-residue chain is Formate--tetrahydrofolate ligase 1 (556 aa).

65–72 (TPAGEGKS) is an ATP binding site.

It belongs to the formate--tetrahydrofolate ligase family.

It catalyses the reaction (6S)-5,6,7,8-tetrahydrofolate + formate + ATP = (6R)-10-formyltetrahydrofolate + ADP + phosphate. It participates in one-carbon metabolism; tetrahydrofolate interconversion. This chain is Formate--tetrahydrofolate ligase 1, found in Streptococcus pyogenes serotype M1.